Consider the following 207-residue polypeptide: Ribonuclease HII (207 aa).

In terms of domain architecture, RNase H type-2 spans 18–206 (EFIVGVDEVG…VKNILQLLEK (189 aa)). Residues D24, E25, and D115 each contribute to the a divalent metal cation site.

This sequence belongs to the RNase HII family. It depends on Mn(2+) as a cofactor. Requires Mg(2+) as cofactor.

The protein localises to the cytoplasm. It catalyses the reaction Endonucleolytic cleavage to 5'-phosphomonoester.. In terms of biological role, endonuclease that specifically degrades the RNA of RNA-DNA hybrids. This Hydrogenovibrio crunogenus (strain DSM 25203 / XCL-2) (Thiomicrospira crunogena) protein is Ribonuclease HII.